The sequence spans 236 residues: Small ribosomal subunit protein uS2c (236 aa).

This sequence belongs to the universal ribosomal protein uS2 family.

Its subcellular location is the plastid. It localises to the chloroplast. This is Small ribosomal subunit protein uS2c (rps2) from Calycanthus floridus var. glaucus (Eastern sweetshrub).